The sequence spans 420 residues: 3-phosphoshikimate 1-carboxyvinyltransferase (420 aa).

3-phosphoshikimate is bound by residues K20, S21, and R25. K20 lines the phosphoenolpyruvate pocket. Residue R119 coordinates phosphoenolpyruvate. The 3-phosphoshikimate site is built by S161, S162, Q163, S189, D303, Q326, and K330. Residue Q163 participates in phosphoenolpyruvate binding. D303 serves as the catalytic Proton acceptor. Positions 334, 375, and 400 each coordinate phosphoenolpyruvate.

It belongs to the EPSP synthase family. As to quaternary structure, monomer.

The protein localises to the cytoplasm. The enzyme catalyses 3-phosphoshikimate + phosphoenolpyruvate = 5-O-(1-carboxyvinyl)-3-phosphoshikimate + phosphate. It functions in the pathway metabolic intermediate biosynthesis; chorismate biosynthesis; chorismate from D-erythrose 4-phosphate and phosphoenolpyruvate: step 6/7. Its function is as follows. Catalyzes the transfer of the enolpyruvyl moiety of phosphoenolpyruvate (PEP) to the 5-hydroxyl of shikimate-3-phosphate (S3P) to produce enolpyruvyl shikimate-3-phosphate and inorganic phosphate. This chain is 3-phosphoshikimate 1-carboxyvinyltransferase, found in Dehalococcoides mccartyi (strain ATCC BAA-2100 / JCM 16839 / KCTC 5957 / BAV1).